Here is a 2462-residue protein sequence, read N- to C-terminus: MGQTLCDFVRQQEVVPANRARKGSAISEDGTTSCTTQPQRNTSISSEEQTVQGANIQKSGHRSFNRSASSRQKPNPTSKLKDTLNRKPTCKQGTLSAHTSTSSTTSIQSSPIEPASSLPTLNTTPTPPAASKSNLFVRVLRRFSNNTLPGKTASSPKNVDDVPKVNDNNNGDLGKQQSTDVEVLCSQDNQSREQNEDEMDSKIEPADAISNQKAGLTSGKPKKDKSVKGTSQAVVSDTKKMEARKSSSDTVIEPLIKQQAPLHSSKTTPTTLTANFVQNIRFVRKNVEQSGRNTNPLQFVELETEFPRDYDDNIEMLSREAEHLEEQFRTPTRSNATDATSHHVAGIIDNIITEASRSLTIEKTEDDVPLKSSTKHSSGVKRVGFQVEDKDDTEVQSEKQAKSFDDITKKAESSEASAEEAAVTGSSTDASASPLPSTSLVSTTSSATSITKSKSDEDDDPVAMSPCGRFFKYDKEVGRGSFKTVYRGLDTLTGVPVAWCELLDKQVKKSERTRFREEADMLKKLQHPNIVRFYTYWEFPIGRKKNIVLVTELMLSGTLKSYLKRFKKIHPKVLKSWCRQILKGLNFLHTRQFPIIHRDLKCDNIFITGTTGSVKIGDLGLATLKNRSHAKSVIGTPEFMAPEMYEEHYDESVDVYAFGMCMLEMAISEYPYSECKGPAQIYKKVISGIKPAALAKVEDPNVRDIIERCIELKKEDRPSCNELLESEFFDEDIGIRVEPTASEQFLSDPSISIIEFRLRFMDPKKRSSRHKENEAIQFEYNIRHDEYEQIAQEMMKENIISEDDSRAVARLLKVQVVSLLKERAQRQTQIKLQNEKSRLEKLALQKQRESLPTNVDEDEEEEEESEDEEDGVKWNQRLQLRYDLLNTDSETSLALSTNSVEPQQLSTRSNTSIPNSGIQQPVQVPGQVPVSQLISVQPQAIPSPAIPMQQKPTVHYIQPPQLASYQNSNASMQEMTNNQVISPTGSQQMQQQQPVVAPTVNHQVMPQQQVNQQQQQPQMMQQIPQQVQVQQPQTVLPPQPHEQQPQQQQQPLQQQLQQLMHTNVQAPDLTQQQQMAQQQAQQYFQQQQQQPQQAVNMQQAYAMQQAGQQQQLSQPLQIQQQILQQQQVAVSHQQQIMQQQLAQHQLQQLQQQQLQQQQLQQQQQIQQQQLQQQQLQQQQFVQQYAQAMPQQQHQQLVTGSQVMAPHQHQQPIQIPVQMQVPPTSVAPPIQHTYNQQGGQVTLSDAQQQQHPGFSAVPQQAAPFIQQPTQQPIQLSMPLEQQLQQLLHSQPAQQQQAMSQQQQQPLVQQQQLPLVQQQPPLVQQQQPLVQHQQPSVQHQQPLVQQPQQQQPQPQNQQPQPQTQQTHVVQQQPPQQQPAVEQISQISSQVPVQQENLQPIQVNKDANVATDAMSLNSAHGALEPAPKTEPQNSADAEKQQKQTGTGTRSQKPRRSNRSGNERIPKLSVTSVDEGSVINCHMENKLKTITFKFDIGDVNPVEIANKLIAQDLLSNCQSTVFVEMINEIVDQVKQNPNQIPIPTNYRRNIEKVRHASLTRQRSTFRSHQRHRSRDETASDITKMFEPTIHGVETLPSGGGGAEQSNCNLTLEARSHLSNIPNAKEPQLNVSTPPTTTSTMSSSSTASRDAPNSSNDVTIGSGSVSRKTSTASEYTSLSIDYMPDSNITPTGPEPPLDDGKDKKPCSLAIARMQKLLESAGNGAPRSLNLPLNRHLKIQEDLKHTRSLDDLTAVKITFDMPNKAALDTSENAQQATEAEAEKPKDKSGQAVGNQGTGAANTLEQLKIELENITHAHAFASAVVASINNRAPHQASPAMSSLKATSGQPQTQEITKPNNGAGPSVPSVGQNTPTAALTSARGSGSSVYNSRRTSIDNSVGSDMHLHTATNLEGTVSNPDPIPTEASVGITIATGHEKQLSKQPSLEKPSATSILTNNSDPPQRNPSNGSINQNSIADLEKKLAALRNTENTEESATATLSVVPKQVEEVVNPSARKISRFSVSRVQEQKTSTGVEEPAQGQLKIDLQVAGPGGQVQTNNSVQNGSVVNTPTEVISSPIQNVPLAINGIQLMYQQPQQIHQLPGGTSTTTSGAGTQCIVVPQVVNQNGTHVQQPSNLQPQQQSVHPNMTQQPQQTPLNGHPSMVNTLQQQPPQQSLPMQTIQSQQQQHNQMPIISQQQQQQILMQQQQQQGSQQGSQQFNLPGTQQTHPQHQFIQSQPNQLHSLPPQVVSMAQGNLPHQLPPMQTMGAQQQMISQQQHQLQMQSHMHQQNVPGMYNQQTGARVAAPQNFAGAVPNHLLQQSPLMASQQPAQPMQHVMQPIFNATSGEVTEEPVSLAATHPHLLPSDIQSDIKHNLDSLVNQLCNTRLGTNQHQRLLLLRQRQLIEEDELRLKHYVEYEKFQKALRQSISTNVPANAAYYSAAAAQLPTNLAAPAAPSSSNPTSTSSANT.

3 disordered regions span residues 18-133 (NRAR…ASKS), 146-248 (NTLP…KSSS), and 365-461 (EDDV…DDDP). Composition is skewed to polar residues over residues 29-58 (DGTT…NIQK) and 65-78 (NRSA…NPTS). A compositionally biased stretch (low complexity) spans 94–124 (TLSAHTSTSSTTSIQSSPIEPASSLPTLNTT). Polar residues predominate over residues 146-155 (NTLPGKTASS). 3 stretches are compositionally biased toward basic and acidic residues: residues 190-205 (QSRE…KIEP), 237-247 (DTKKMEARKSS), and 396-413 (QSEK…KAES). Positions 414–452 (SEASAEEAAVTGSSTDASASPLPSTSLVSTTSSATSITK) are enriched in low complexity. Positions 471 to 729 (FKYDKEVGRG…CNELLESEFF (259 aa)) constitute a Protein kinase domain. ATP-binding positions include Ser-481, 551-554 (TELM), and Lys-601. Asp-618 functions as the Proton acceptor in the catalytic mechanism. Ser-628 and Ser-632 each carry phosphoserine; by autocatalysis. 3 disordered regions span residues 844–873 (LQKQ…DGVK), 893–923 (LALS…QPVQ), and 1006–1055 (PQQQ…LQQQ). The span at 855–870 (VDEDEEEEEESEDEED) shows a compositional bias: acidic residues. Over residues 893-918 (LALSTNSVEPQQLSTRSNTSIPNSGI) the composition is skewed to polar residues. 2 stretches are compositionally biased toward low complexity: residues 1006 to 1034 (PQQQ…QPQT) and 1041 to 1055 (HEQQ…LQQQ). Positions 1142 to 1178 (AQHQLQQLQQQQLQQQQLQQQQQIQQQQLQQQQLQQQ) form a coiled coil. Residues 1236–1251 (QGGQVTLSDAQQQQHP) show a composition bias toward polar residues. Disordered regions lie at residues 1236 to 1256 (QGGQ…FSAV), 1322 to 1382 (QQQQ…EQIS), 1418 to 1465 (GALE…PKLS), 1554 to 1578 (LTRQ…SDIT), 1615 to 1699 (NIPN…KDKK), 1762 to 1790 (DTSE…GNQG), 1828 to 1895 (QASP…SVGS), 1929 to 1966 (HEKQ…SINQ), and 2122 to 2229 (THVQ…FIQS). The span at 1559 to 1568 (STFRSHQRHR) shows a compositional bias: basic residues. Residues 1627–1641 (STPPTTTSTMSSSST) are compositionally biased toward low complexity. Polar residues predominate over residues 1642–1674 (ASRDAPNSSNDVTIGSGSVSRKTSTASEYTSLS). Polar residues-rich tracts occupy residues 1828–1852 (QASP…TKPN), 1861–1894 (SVGQ…NSVG), and 1943–1966 (SATS…SINQ). Positions 2125–2136 (QQPSNLQPQQQS) are enriched in low complexity. Polar residues predominate over residues 2137–2160 (VHPNMTQQPQQTPLNGHPSMVNTL). Residues 2161–2211 (QQQPPQQSLPMQTIQSQQQQHNQMPIISQQQQQQILMQQQQQQGSQQGSQQ) are compositionally biased toward low complexity. Polar residues predominate over residues 2212–2229 (FNLPGTQQTHPQHQFIQS).

It belongs to the protein kinase superfamily. Ser/Thr protein kinase family. WNK subfamily. It depends on Mg(2+) as a cofactor. Autophosphorylated. Autophosphorylation at Ser-628 and Ser-632 promotes its activity.

Its subcellular location is the cytoplasm. It catalyses the reaction L-seryl-[protein] + ATP = O-phospho-L-seryl-[protein] + ADP + H(+). The catalysed reaction is L-threonyl-[protein] + ATP = O-phospho-L-threonyl-[protein] + ADP + H(+). With respect to regulation, activated in response to hyperosmotic stress: cell shrinkage promotes formation of a membraneless compartment that concentrates wnk-1 with its downstrem substrates. Activation requires autophosphorylation. Autophosphorylation and subsequent activation is inhibited by increases in intracellular Cl(-) or K(+). In terms of biological role, serine/threonine-protein kinase component of the WNK-SPAK/OSR1 kinase cascade, which plays an important role in the regulation of electrolyte homeostasis and regulatory volume increase in response to hyperosmotic stress. Wnk mediates regulatory volume increase in response to hyperosmotic stress by acting as a molecular crowding sensor, which senses cell shrinkage and mediates formation of a membraneless compartment by undergoing liquid-liquid phase separation. The membraneless compartment concentrates Wnk with its substrate Fray, promoting Wnk-dependent phosphorylation and activation of downstream kinase Fray. Following activation, Fray catalyzes phosphorylation of ion cotransporters Ncc69 and Irk1, regulating their activity. Phosphorylation of Na-K-Cl cotransporter Ncc69 promotes its activation and ion influx. Involved in circadian rhythms in small ventral lateral (sLNv) pacemaker neurons: in the morning, Wnk activity is repressed by high levels of intracellular chloride; in contrast Wnk activation in the evening promotes the activation of the inwardly rectifying potassium channel Irk1 via Fray. Acts as a positive regulator of the canonical Wnt signaling pathway during wing disk development. In Drosophila melanogaster (Fruit fly), this protein is Serine/threonine-protein kinase Wnk.